A 420-amino-acid polypeptide reads, in one-letter code: RING finger protein 39 (420 aa).

The RING-type zinc finger occupies 88–135; it reads CPLCGGSFEDPVLLACEHSFCRACLARRWGTPPATDTEASPTACPCCG. 2 disordered regions span residues 166 to 186 and 246 to 265; these read PGARAGRRRGGRIPTMGCLDP and DRRSVQLAPPGTPAPPDGPK. The B30.2/SPRY domain occupies 210–420; sequence DDLPEDYPVV…APLRIVPAES (211 aa).

The protein resides in the cytoplasm. The catalysed reaction is S-ubiquitinyl-[E2 ubiquitin-conjugating enzyme]-L-cysteine + [acceptor protein]-L-lysine = [E2 ubiquitin-conjugating enzyme]-L-cysteine + N(6)-ubiquitinyl-[acceptor protein]-L-lysine.. It participates in protein modification; protein ubiquitination. Its function is as follows. Plays an inhibitory role in anti-RNA viral innate immunity by targeting the adapter DDX3X and promoting its 'Lys-48'-linked polyubiquitination. Alternatively, enhances the cGAS-STING pathway activation by promoting 'Lys-63'-linked ubiquitination of STING1, facilitating the STING1-TBK1 complex formation and STING1 activation. The protein is RING finger protein 39 (RNF39) of Macaca mulatta (Rhesus macaque).